Consider the following 610-residue polypeptide: UvrABC system protein C (610 aa).

The region spanning 16–94 (SQPGVYRMYD…IKLYQPRYNV (79 aa)) is the GIY-YIG domain. The UVR domain occupies 204–239 (DQVLTQLISRMETASQNLEFEEAARIRDQIQAVRRV).

Belongs to the UvrC family. Interacts with UvrB in an incision complex.

The protein localises to the cytoplasm. Functionally, the UvrABC repair system catalyzes the recognition and processing of DNA lesions. UvrC both incises the 5' and 3' sides of the lesion. The N-terminal half is responsible for the 3' incision and the C-terminal half is responsible for the 5' incision. This chain is UvrABC system protein C, found in Escherichia coli O45:K1 (strain S88 / ExPEC).